The sequence spans 362 residues: Acetylglutamate kinase (362 aa).

Residues 1–11 are compositionally biased toward pro residues; that stretch reads MNAPTRTPPPS. The tract at residues 1–42 is disordered; sequence MNAPTRTPPPSNGGHGSTGSTGSTGDAAPGGGTGRGPAATAR. Residues 106-107, arginine 128, and asparagine 227 each bind substrate; that span reads GG. Residues 329-362 form a disordered region; the sequence is MAESGTSPEPGTPPAPAARPAGIVPAGEPTGGTP. Residues 346–355 are compositionally biased toward low complexity; that stretch reads ARPAGIVPAG.

The protein belongs to the acetylglutamate kinase family. ArgB subfamily.

It is found in the cytoplasm. It carries out the reaction N-acetyl-L-glutamate + ATP = N-acetyl-L-glutamyl 5-phosphate + ADP. Its pathway is amino-acid biosynthesis; L-arginine biosynthesis; N(2)-acetyl-L-ornithine from L-glutamate: step 2/4. In terms of biological role, catalyzes the ATP-dependent phosphorylation of N-acetyl-L-glutamate. The protein is Acetylglutamate kinase of Frankia casuarinae (strain DSM 45818 / CECT 9043 / HFP020203 / CcI3).